We begin with the raw amino-acid sequence, 282 residues long: Bifunctional protein FolD (282 aa).

NADP(+) is bound by residues 165–167 (GRS) and Ser-190.

The protein belongs to the tetrahydrofolate dehydrogenase/cyclohydrolase family. In terms of assembly, homodimer.

It catalyses the reaction (6R)-5,10-methylene-5,6,7,8-tetrahydrofolate + NADP(+) = (6R)-5,10-methenyltetrahydrofolate + NADPH. It carries out the reaction (6R)-5,10-methenyltetrahydrofolate + H2O = (6R)-10-formyltetrahydrofolate + H(+). It participates in one-carbon metabolism; tetrahydrofolate interconversion. Its function is as follows. Catalyzes the oxidation of 5,10-methylenetetrahydrofolate to 5,10-methenyltetrahydrofolate and then the hydrolysis of 5,10-methenyltetrahydrofolate to 10-formyltetrahydrofolate. The chain is Bifunctional protein FolD from Acinetobacter baumannii (strain ATCC 17978 / DSM 105126 / CIP 53.77 / LMG 1025 / NCDC KC755 / 5377).